The following is a 1128-amino-acid chain: Adipocyte enhancer-binding protein 1 (1128 aa).

The N-terminal stretch at 1–25 is a signal peptide; it reads MAAVRTASLLCGLLALLALCPEGSP. The interval 40 to 368 is disordered; it reads GFLSEFETQS…PRKGEELEEE (329 aa). Over residues 77 to 109 the composition is skewed to basic and acidic residues; sequence PRADAEAPPEKNKDKEKKGKKDKGPKAAKHLEG. Positions 113–163 are enriched in basic residues; that stretch reads PTKKPKEKPPKATKKPKEKPPKATKKPKEKPPKATKKPKEKPPKATKRPSA. 2 stretches are compositionally biased toward polar residues: residues 178–187 and 198–209; these read RSLTSPSNPG and TSLNTWQGQGEE. Residues 249-261 show a composition bias toward basic residues; sequence RQKQPRPTPSRKR. Composition is skewed to basic and acidic residues over residues 267 to 282 and 327 to 363; these read PEEK…EVDP and EELK…RKGE. In terms of domain architecture, F5/8 type C spans 375–532; that stretch reads IKCPPIGMES…LCMRLEVLGC (158 aa). A required for DNA-binding and interaction with NFKBIA region spans residues 382–547; sequence MESHRIEDNQ…YSYYAQNEVV (166 aa). 2 interaction with MAPK1 and MAPK3 regions span residues 413 to 616 and 998 to 1128; these read AGAN…TAGM and DPSR…FGDF. Asn520 carries an N-linked (GlcNAc...) asparagine glycan. The interval 547 to 977 is interaction with PTEN; the sequence is VTTDSLDFRH…TQCNFILARS (431 aa). A Peptidase M14 domain is found at 555-896; that stretch reads RHHSYKDMRQ…EALLTFMEQV (342 aa). The interval 933–1128 is required for transcriptional repression; it reads DYWRILNPGE…ETYTVNFGDF (196 aa). A disordered region spans residues 1027–1056; the sequence is LRRLNSTTGPATSPTPALTLPPSPTPGSTS. Positions 1030-1044 are enriched in low complexity; sequence LNSTTGPATSPTPAL.

The protein belongs to the peptidase M14 family. As to quaternary structure, interacts with different types of collagen, including collagens I, III, and V. Interacts with GNG5, NFKBIA, MAPK1, MAPK3 and PTEN. May interact with calmodulin. Interaction with MAPK1 may stimulate DNA-binding. Binds to DNA in vitro. Post-translationally, phosphorylated by MAPK1 in vitro. In terms of tissue distribution, expressed in aorta.

It is found in the secreted. Functionally, as a positive regulator of collagen fibrillogenesis, it is probably involved in the organization and remodeling of the extracellular matrix. May positively regulate MAP-kinase activity in adipocytes, leading to enhanced adipocyte proliferation and reduced adipocyte differentiation. May also positively regulate NF-kappa-B activity in macrophages by promoting the phosphorylation and subsequent degradation of I-kappa-B-alpha (NFKBIA), leading to enhanced macrophage inflammatory responsiveness. Can act as a transcriptional repressor. The protein is Adipocyte enhancer-binding protein 1 (Aebp1) of Rattus norvegicus (Rat).